Here is a 482-residue protein sequence, read N- to C-terminus: MFS-type transporter cnsL (482 aa).

The chain crosses the membrane as a helical span at residues 73–93 (LFVCATLSGLDKTAISAAAVY). N100 carries N-linked (GlcNAc...) asparagine glycosylation. A run of 9 helical transmembrane segments spans residues 108-128 (WIGS…AYCL), 131-151 (VPAV…EMSV), 170-190 (IILN…VGYY), 199-219 (IIFL…YFVL), 304-324 (LLAM…SYLA), 333-353 (AIVT…YALP), 361-381 (LVGL…VSVY), 392-412 (ITLY…GPQT), and 426-446 (VAMI…GVVC).

This sequence belongs to the major facilitator superfamily. Allantoate permease family.

The protein resides in the cell membrane. Its function is as follows. MFS-type transporter; part of the gene cluster that mediates the biosynthesis of communesins, a prominent class of indole alkaloids with great potential as pharmaceuticals. With the MFS transporter cnsO, is most likely responsible for cummunesins secretion and thereby may contribute to intrinsic resistance. The sequence is that of MFS-type transporter cnsL from Penicillium expansum (Blue mold rot fungus).